The following is a 138-amino-acid chain: Mediator of RNA polymerase II transcription subunit 22 (138 aa).

Positions 13–40 (LKSYNSRLKEDIRSMRENFEEIIRLAKG) form a coiled coil.

This sequence belongs to the Mediator complex subunit 22 family. In terms of assembly, component of the Mediator complex.

The protein localises to the nucleus. Functionally, component of the Mediator complex, a coactivator involved in the regulated transcription of nearly all RNA polymerase II-dependent genes. Mediator functions as a bridge to convey information from gene-specific regulatory proteins to the basal RNA polymerase II transcription machinery. Mediator is recruited to promoters by direct interactions with regulatory proteins and serves as a scaffold for the assembly of a functional preinitiation complex with RNA polymerase II and the general transcription factors. The polypeptide is Mediator of RNA polymerase II transcription subunit 22 (MED22) (Anopheles gambiae (African malaria mosquito)).